The following is a 544-amino-acid chain: Cytochrome P450 monooxygenase cle2 (544 aa).

Residues 19–39 (LGLLIGLSLILSITWTAYTIL) traverse the membrane as a helical segment. A disordered region spans residues 273–305 (RTQQVEQSIEKNTKNEKKEDEDEDQNEDEETPG). Basic and acidic residues predominate over residues 280-290 (SIEKNTKNEKK). The span at 291-304 (EDEDEDQNEDEETP) shows a compositional bias: acidic residues. Heme is bound at residue Cys-478.

Belongs to the cytochrome P450 family. Heme serves as cofactor.

Its subcellular location is the membrane. It participates in secondary metabolite biosynthesis; terpenoid biosynthesis. Its function is as follows. Cytochrome P450 monooxygenase; part of the cluster A that mediates the biosynthesis of chevalone E and its oxidized derivatives that possess a unique five-membered lactone ring and can synergistically enhance the cytotoxicity of doxorubicin (DOX) in breast cancer cells. Within the pathway, cle2 is involved in hydroxylation of the chavalone E scaffold at position C-20 and contributes with cle4 to the production of seven oxidation derivatives. The molecular scaffold is commonly biosynthesized by a series of enzymes including the non-reducing polyketide synthase (NR-PKS) cle1 that produces the alpha-pyrone triacetic acid lactone (TAL); The membrane-bound prenyltransferase cle5 that accepts TAL as its substrate to perform a C-3 geranylgeranylation reaction, in which the pathway-dedicated GGPS cle6 is required to provide GGPP, the other substrate of cle5; the FAD-dependent monooxygenase Cle3 that forms an (S)-epoxide ring at the terminal olefin of the geranylgeranyl group; and the terpene cyclase Cle7 that catalyzes the cyclization of the prenyl group that yields the pentacyclic pathway intermediate chevalone E. Chevalone E can derivatize into seven new oxidized analogs by the cytochrome P450 monooxygenases cle2 (acting at C-20) and cle4 (acting at C-11 and C-12). The polypeptide is Cytochrome P450 monooxygenase cle2 (Aspergillus versicolor).